A 254-amino-acid polypeptide reads, in one-letter code: NAD kinase (254 aa).

Asp-44 functions as the Proton acceptor in the catalytic mechanism. NAD(+) is bound by residues 44 to 45 (DG), 114 to 115 (NE), Asp-144, Ala-152, 155 to 160 (TAYNYS), and Ala-179.

This sequence belongs to the NAD kinase family. It depends on a divalent metal cation as a cofactor.

The protein localises to the cytoplasm. The catalysed reaction is NAD(+) + ATP = ADP + NADP(+) + H(+). Its function is as follows. Involved in the regulation of the intracellular balance of NAD and NADP, and is a key enzyme in the biosynthesis of NADP. Catalyzes specifically the phosphorylation on 2'-hydroxyl of the adenosine moiety of NAD to yield NADP. The sequence is that of NAD kinase from Cereibacter sphaeroides (strain ATCC 17025 / ATH 2.4.3) (Rhodobacter sphaeroides).